Consider the following 477-residue polypeptide: tRNA-2-methylthio-N(6)-dimethylallyladenosine synthase (477 aa).

One can recognise an MTTase N-terminal domain in the interval 13-130 (GGLFIKTYGC…LPAMIEEALA (118 aa)). 6 residues coordinate [4Fe-4S] cluster: cysteine 22, cysteine 59, cysteine 93, cysteine 178, cysteine 182, and cysteine 185. The 233-residue stretch at 164 to 396 (ESNGVSAFVS…QAMLNEQTAA (233 aa)) folds into the Radical SAM core domain. The region spanning 399-462 (EGMVGTTQRV…ANSLKGKLVA (64 aa)) is the TRAM domain.

Belongs to the methylthiotransferase family. MiaB subfamily. As to quaternary structure, monomer. Requires [4Fe-4S] cluster as cofactor.

The protein localises to the cytoplasm. It catalyses the reaction N(6)-dimethylallyladenosine(37) in tRNA + (sulfur carrier)-SH + AH2 + 2 S-adenosyl-L-methionine = 2-methylsulfanyl-N(6)-dimethylallyladenosine(37) in tRNA + (sulfur carrier)-H + 5'-deoxyadenosine + L-methionine + A + S-adenosyl-L-homocysteine + 2 H(+). Its function is as follows. Catalyzes the methylthiolation of N6-(dimethylallyl)adenosine (i(6)A), leading to the formation of 2-methylthio-N6-(dimethylallyl)adenosine (ms(2)i(6)A) at position 37 in tRNAs that read codons beginning with uridine. This is tRNA-2-methylthio-N(6)-dimethylallyladenosine synthase from Hydrogenovibrio crunogenus (strain DSM 25203 / XCL-2) (Thiomicrospira crunogena).